Here is a 187-residue protein sequence, read N- to C-terminus: Elongation factor P 2 (187 aa).

It belongs to the elongation factor P family.

Its subcellular location is the cytoplasm. It participates in protein biosynthesis; polypeptide chain elongation. In terms of biological role, involved in peptide bond synthesis. Stimulates efficient translation and peptide-bond synthesis on native or reconstituted 70S ribosomes in vitro. Probably functions indirectly by altering the affinity of the ribosome for aminoacyl-tRNA, thus increasing their reactivity as acceptors for peptidyl transferase. The sequence is that of Elongation factor P 2 from Geobacter sulfurreducens (strain ATCC 51573 / DSM 12127 / PCA).